Reading from the N-terminus, the 252-residue chain is Tumor necrosis factor ligand superfamily member 15 (252 aa).

The Cytoplasmic portion of the chain corresponds to 1–39 (MAEELGLGFGEAVPVEMLPEGCRHRREARTGLAARSKAC). A helical; Signal-anchor for type II membrane protein transmembrane segment spans residues 40–60 (LALTCCLLSFPILAGLSTLLM). Residues 61 to 252 (TGQLRIPGKD…DKTFFGAFLI (192 aa)) lie on the Extracellular side of the membrane. The 157-residue stretch at 96 to 252 (PKAHLTIMRQ…DKTFFGAFLI (157 aa)) folds into the THD domain. N-linked (GlcNAc...) asparagine glycosylation is present at Asn134. Cys163 and Cys203 are joined by a disulfide. N-linked (GlcNAc...) asparagine glycosylation occurs at Asn230.

This sequence belongs to the tumor necrosis factor family. As to quaternary structure, homotrimer.

It is found in the membrane. Its function is as follows. Receptor for TNFRSF25 and TNFRSF6B. Mediates activation of NF-kappa-B. Inhibits vascular endothelial growth and angiogenesis (in vitro). Promotes activation of caspases and apoptosis. Promotes splenocyte alloactivation. This Rattus norvegicus (Rat) protein is Tumor necrosis factor ligand superfamily member 15 (Tnfsf15).